The following is a 183-amino-acid chain: TATA-box-binding protein 1 (183 aa).

A run of 2 repeats spans residues 8-84 (IENV…AKKL) and 99-177 (VQNI…RQQL).

The protein belongs to the TBP family.

Its function is as follows. General factor that plays a role in the activation of archaeal genes transcribed by RNA polymerase. Binds specifically to the TATA box promoter element which lies close to the position of transcription initiation. The sequence is that of TATA-box-binding protein 1 from Methanosarcina acetivorans (strain ATCC 35395 / DSM 2834 / JCM 12185 / C2A).